Here is a 356-residue protein sequence, read N- to C-terminus: Protein RecA (356 aa).

An ATP-binding site is contributed by Gly-77 to Thr-84.

This sequence belongs to the RecA family.

Its subcellular location is the cytoplasm. In terms of biological role, can catalyze the hydrolysis of ATP in the presence of single-stranded DNA, the ATP-dependent uptake of single-stranded DNA by duplex DNA, and the ATP-dependent hybridization of homologous single-stranded DNAs. It interacts with LexA causing its activation and leading to its autocatalytic cleavage. In Caulobacter sp. (strain K31), this protein is Protein RecA.